Consider the following 136-residue polypeptide: Large-conductance mechanosensitive channel (136 aa).

2 helical membrane-spanning segments follow: residues 10 to 30 and 76 to 96; these read FAMRGNVVDLAVGVIIGAAFG and GSFIQSVFDFVIVALAIFSAV.

The protein belongs to the MscL family. In terms of assembly, homopentamer.

It localises to the cell inner membrane. Channel that opens in response to stretch forces in the membrane lipid bilayer. May participate in the regulation of osmotic pressure changes within the cell. In Yersinia enterocolitica serotype O:8 / biotype 1B (strain NCTC 13174 / 8081), this protein is Large-conductance mechanosensitive channel.